We begin with the raw amino-acid sequence, 284 residues long: Bifunctional protein FolD (284 aa).

NADP(+) is bound by residues 166–168 (GAS) and I232.

The protein belongs to the tetrahydrofolate dehydrogenase/cyclohydrolase family. Homodimer.

It catalyses the reaction (6R)-5,10-methylene-5,6,7,8-tetrahydrofolate + NADP(+) = (6R)-5,10-methenyltetrahydrofolate + NADPH. It carries out the reaction (6R)-5,10-methenyltetrahydrofolate + H2O = (6R)-10-formyltetrahydrofolate + H(+). The protein operates within one-carbon metabolism; tetrahydrofolate interconversion. Functionally, catalyzes the oxidation of 5,10-methylenetetrahydrofolate to 5,10-methenyltetrahydrofolate and then the hydrolysis of 5,10-methenyltetrahydrofolate to 10-formyltetrahydrofolate. This chain is Bifunctional protein FolD, found in Pseudomonas paraeruginosa (strain DSM 24068 / PA7) (Pseudomonas aeruginosa (strain PA7)).